We begin with the raw amino-acid sequence, 485 residues long: MMIPVILSGGSGSRLWPLSRKQFPKQFLALTGEHTLFQQTIERLVFEGMDTPIVVCNKDHKFIVQEQLAALKLETQGILMEPFGRNTAPAVAMAAMKLVNEGRDELMLVLPADHVIDDQKALQRALALATVAAERGEMVLFGVPATKPETGYGYIRSSQDALLPEGVARVAQFVEKPDEKRAAEFVQAGGYFWNSGMFLFRASRFLEELKKHDGDIYDTCVLALERSQEDGDVLSIDEATFACCPDNSIDYAVMEKTQRACVVPMSAGWSDVGCWSSLWEVHEKDDNGNVTKGDVVVQDSRNCMIHGNGKLVSVIGLENIVVVETKDAMMIAHKDKVQGVKQMVKTLDEQGRTETQNHLEVYRPWGSYDSVDMGGRFQVKHITVKPGASLSLQMHHHRAEHWIVVSGTAEVTCDENVFLLTENQSTYIPIASVHRLRNPGKIPLEIIEVQSGSYLGEDDIERFEDVYGRTSTPIERGVSVKTIAQ.

It belongs to the mannose-6-phosphate isomerase type 2 family. Monomer. The cofactor is Co(2+).

The enzyme catalyses D-mannose 6-phosphate = D-fructose 6-phosphate. It catalyses the reaction alpha-D-mannose 1-phosphate + GTP + H(+) = GDP-alpha-D-mannose + diphosphate. The protein operates within nucleotide-sugar biosynthesis; GDP-alpha-D-mannose biosynthesis; GDP-alpha-D-mannose from alpha-D-mannose 1-phosphate (GTP route): step 1/1. It participates in nucleotide-sugar biosynthesis; GDP-alpha-D-mannose biosynthesis; alpha-D-mannose 1-phosphate from D-fructose 6-phosphate: step 1/2. Functionally, produces a precursor for alginate polymerization. The alginate layer provides a protective barrier against host immune defenses and antibiotics. The polypeptide is Alginate biosynthesis protein AlgA (algA) (Pseudomonas putida (strain ATCC 47054 / DSM 6125 / CFBP 8728 / NCIMB 11950 / KT2440)).